Consider the following 247-residue polypeptide: tRNA pseudouridine synthase A (247 aa).

Asp52 serves as the catalytic Nucleophile. Tyr111 is a substrate binding site.

It belongs to the tRNA pseudouridine synthase TruA family. As to quaternary structure, homodimer.

It catalyses the reaction uridine(38/39/40) in tRNA = pseudouridine(38/39/40) in tRNA. Formation of pseudouridine at positions 38, 39 and 40 in the anticodon stem and loop of transfer RNAs. The sequence is that of tRNA pseudouridine synthase A from Erythrobacter litoralis (strain HTCC2594).